The following is a 199-amino-acid chain: Ribosomal RNA large subunit methyltransferase E (199 aa).

Residues glycine 53, tryptophan 55, aspartate 73, aspartate 92, and aspartate 114 each contribute to the S-adenosyl-L-methionine site. Lysine 154 functions as the Proton acceptor in the catalytic mechanism.

This sequence belongs to the class I-like SAM-binding methyltransferase superfamily. RNA methyltransferase RlmE family.

Its subcellular location is the cytoplasm. It catalyses the reaction uridine(2552) in 23S rRNA + S-adenosyl-L-methionine = 2'-O-methyluridine(2552) in 23S rRNA + S-adenosyl-L-homocysteine + H(+). Functionally, specifically methylates the uridine in position 2552 of 23S rRNA at the 2'-O position of the ribose in the fully assembled 50S ribosomal subunit. The chain is Ribosomal RNA large subunit methyltransferase E from Treponema denticola (strain ATCC 35405 / DSM 14222 / CIP 103919 / JCM 8153 / KCTC 15104).